The following is a 404-amino-acid chain: Probable RNA polymerase sigma-C factor (404 aa).

The Polymerase core binding signature appears at 193–206 (DLIQEGTLGLERAV). The segment at residues 362 to 381 (LSEIGRILNLSRERVRQIEA) is a DNA-binding region (H-T-H motif).

This sequence belongs to the sigma-70 factor family.

Sigma factors are initiation factors that promote the attachment of RNA polymerase to specific initiation sites and are then released. The sequence is that of Probable RNA polymerase sigma-C factor (sigC) from Synechocystis sp. (strain ATCC 27184 / PCC 6803 / Kazusa).